A 391-amino-acid polypeptide reads, in one-letter code: MTKKIKTLNLNFGPQHPAAHGVLRLILELDGEVVEKADPHIGLLHRGTEKLIENKTYMQAVPYFDRLDYVAPMNQEHAFALAIEKILKINVPIRAQLIRVMFCEIGRILSHILNVTTQALDVGALTPSLWGFEERETLMTFYERASGSRLHANYFRAGGVHQDLPMGLAEDIGNFCESFPKIIDDLETLLTDNRIFKQRNVDIGIVTKEDALDYSFSGVMIRGSGVPWDLRKSQPYDCYEQLEFKIPVGKNGDCFDRYLCRIEEMRESVSIIKQCLSKMEKGPIKSLDGKISPPPKKDIKQSMEALIHHFKLFTEGYRVDKDEIYTAVEAPKGEFGVYLISDGTSKPYKCKIRAPGFSHLQAMDYLIKGHMLADVPAVLGSLDIVFGEVDR.

It belongs to the complex I 49 kDa subunit family. As to quaternary structure, NDH-1 is composed of 14 different subunits. Subunits NuoB, C, D, E, F, and G constitute the peripheral sector of the complex.

The protein resides in the cell inner membrane. It catalyses the reaction a quinone + NADH + 5 H(+)(in) = a quinol + NAD(+) + 4 H(+)(out). NDH-1 shuttles electrons from NADH, via FMN and iron-sulfur (Fe-S) centers, to quinones in the respiratory chain. The immediate electron acceptor for the enzyme in this species is believed to be ubiquinone. Couples the redox reaction to proton translocation (for every two electrons transferred, four hydrogen ions are translocated across the cytoplasmic membrane), and thus conserves the redox energy in a proton gradient. The protein is NADH-quinone oxidoreductase subunit D of Pelagibacter ubique (strain HTCC1062).